Reading from the N-terminus, the 259-residue chain is Src-like-adapter 2 (259 aa).

The span at 1-20 shows a compositional bias: low complexity; that stretch reads MGSLSSRGKTSSPSPSSSGP. Residues 1 to 30 are disordered; sequence MGSLSSRGKTSSPSPSSSGPDQEPVSMQPE. Residue Gly-2 is the site of N-myristoyl glycine attachment. The SH3 domain maps to 31-91; the sequence is RHKVTAVALG…PSVYVAKVAH (61 aa). Residues 93–190 enclose the SH2 domain; that stretch reads WLYEGLSREK…GICCPLREPC (98 aa). The segment at 190 to 259 is SLA C-terminal; the sequence is CVLQKLGPLP…SLAEDPLDDA (70 aa).

In terms of assembly, interacts (via its C-terminal domain) with CBL (phosphorylated). Interacts (via SH2 domain) with ZAP70 (phosphorylated) and CD3Z (phosphorylated). Interacts (via SH2 domain) with CSF1R (phosphorylated). In terms of processing, phosphorylated by CSF1R. Mainly expressed in immune system. Highly expressed in spleen and thymus and expressed at intermediate levels in lung. Not expressed in liver, heart and brain. Isoform 1 is predominant in lung and spleen, while isoform 2 is predominant in thymus.

Its subcellular location is the cytoplasm. The protein resides in the cell membrane. The protein localises to the cytoplasmic vesicle. It localises to the late endosome. Functionally, adapter protein, which negatively regulates T-cell receptor (TCR) signaling. Inhibits T-cell antigen-receptor induced activation of nuclear factor of activated T-cells. May act by linking signaling proteins such as ZAP70 with CBL, leading to a CBL dependent degradation of signaling proteins. This is Src-like-adapter 2 (Sla2) from Mus musculus (Mouse).